Here is a 133-residue protein sequence, read N- to C-terminus: Profilin (133 aa).

It belongs to the profilin family.

In terms of biological role, more likely to influence phosphoinositide metabolism than actin assembly. This chain is Profilin, found in Camelus.